We begin with the raw amino-acid sequence, 385 residues long: Cytochrome b (385 aa).

Residues 1 to 27 are Mitochondrial matrix-facing; sequence MAFRKSNVYLSLVNSYIIDSPQPSSIN. Residue Y16 participates in a ubiquinone binding. The helical transmembrane segment at 28 to 51 threads the bilayer; the sequence is YWWNMGSLLGLCLVIQIVTGIFMA. Topologically, residues 52 to 74 are mitochondrial intermembrane; that stretch reads MHYSSNIELAFSSVEHIMRDVHN. The chain crosses the membrane as a helical span at residues 75–102; sequence GYILRYLHANGASFFFMVMFMHMAKGLY. Heme b contacts are provided by H82 and H96. Residues 103–110 are Mitochondrial matrix-facing; sequence YGSYRSPR. A helical transmembrane segment spans residues 111–135; the sequence is VTLWNVGVIIFILTIATAFLGYCCV. Residues 136–172 are Mitochondrial intermembrane-facing; it reads YGQMSHWGATVITNLFSAIPFVGNDIVSWLWGGFSVS. A helical transmembrane segment spans residues 173 to 204; sequence NPTIQRFFALHYLVPFIIAAMVIMHLMALHIH. The heme b site is built by H183 and H197. Position 202 (H202) interacts with a ubiquinone. Topologically, residues 205 to 223 are mitochondrial matrix; the sequence is GSSNPLGITGNLDRIPMHS. Residues 224 to 246 traverse the membrane as a helical segment; that stretch reads YFIFKDLVTVFLFMLILALFVFY. Over 247–287 the chain is Mitochondrial intermembrane; sequence SPNTLGHPDNYIPGNPLVTPASIVPEWYLLPFYAILRSIPD. A helical transmembrane segment spans residues 288–308; sequence KLLGVITMFAAILVLLVLPFT. At 309–319 the chain is on the mitochondrial matrix side; it reads DRSVVRGNTFK. Residues 320 to 340 traverse the membrane as a helical segment; it reads VLSKFFFFIFVFNFVLLGQIG. Residues 341–347 lie on the Mitochondrial intermembrane side of the membrane; the sequence is ACHVEVP. The chain crosses the membrane as a helical span at residues 348–364; the sequence is YVLMGQIATFIYFAYFL. At 365-385 the chain is on the mitochondrial matrix side; it reads IIVPVISTIENVLFYIGRVNK.

It belongs to the cytochrome b family. As to quaternary structure, component of the ubiquinol-cytochrome c oxidoreductase (cytochrome b-c1 complex, complex III, CIII), a multisubunit enzyme composed of 10 subunits. The complex is composed of 3 respiratory subunits cytochrome b (COB), cytochrome c1 (CYT1) and Rieske protein (RIP1), 2 core protein subunits COR1 and QCR2, and 5 low-molecular weight protein subunits QCR6, QCR7, QCR8, QCR9 and QCR10. The complex exists as an obligatory dimer and forms supercomplexes (SCs) in the inner mitochondrial membrane with a monomer or a dimer of cytochrome c oxidase (complex IV, CIV), resulting in 2 different assemblies (supercomplexes III(2)IV and III(2)IV(2)). Heme b serves as cofactor.

The protein resides in the mitochondrion inner membrane. It carries out the reaction a quinol + 2 Fe(III)-[cytochrome c](out) = a quinone + 2 Fe(II)-[cytochrome c](out) + 2 H(+)(out). Component of the ubiquinol-cytochrome c oxidoreductase, a multisubunit transmembrane complex that is part of the mitochondrial electron transport chain which drives oxidative phosphorylation. The respiratory chain contains 3 multisubunit complexes succinate dehydrogenase (complex II, CII), ubiquinol-cytochrome c oxidoreductase (cytochrome b-c1 complex, complex III, CIII) and cytochrome c oxidase (complex IV, CIV), that cooperate to transfer electrons derived from NADH and succinate to molecular oxygen, creating an electrochemical gradient over the inner membrane that drives transmembrane transport and the ATP synthase. The cytochrome b-c1 complex catalyzes electron transfer from ubiquinol to cytochrome c, linking this redox reaction to translocation of protons across the mitochondrial inner membrane, with protons being carried across the membrane as hydrogens on the quinol. In the process called Q cycle, 2 protons are consumed from the matrix, 4 protons are released into the intermembrane space and 2 electrons are passed to cytochrome c. Cytochrome b is a catalytic core subunit containing 2 b-type hemes BL and BH topographically segregated in the quinone reduction (Qi) and quinol oxidation (Q0) sites on opposite sides of the membrane. The protein is Cytochrome b (COB) of Saccharomyces cerevisiae (strain ATCC 204508 / S288c) (Baker's yeast).